The sequence spans 345 residues: Hydroxymethylglutaryl-CoA synthase (345 aa).

Aspartate 28 serves as a coordination point for (3S)-3-hydroxy-3-methylglutaryl-CoA. The active-site Proton donor/acceptor is glutamate 80. Residues cysteine 112 and threonine 153 each contribute to the (3S)-3-hydroxy-3-methylglutaryl-CoA site. Residue cysteine 112 is the Acyl-thioester intermediate of the active site. Arginine 199 contributes to the CoA binding site. (3S)-3-hydroxy-3-methylglutaryl-CoA is bound by residues threonine 201 and histidine 234. The active-site Proton donor/acceptor is histidine 234. CoA is bound at residue lysine 239. (3S)-3-hydroxy-3-methylglutaryl-CoA contacts are provided by arginine 243, asparagine 266, and serine 296.

This sequence belongs to the thiolase-like superfamily. Archaeal HMG-CoA synthase family. In terms of assembly, interacts with acetoacetyl-CoA thiolase that catalyzes the precedent step in the pathway and with a DUF35 protein. The acetoacetyl-CoA thiolase/HMG-CoA synthase complex channels the intermediate via a fused CoA-binding site, which allows for efficient coupling of the endergonic thiolase reaction with the exergonic HMGCS reaction.

It carries out the reaction acetoacetyl-CoA + acetyl-CoA + H2O = (3S)-3-hydroxy-3-methylglutaryl-CoA + CoA + H(+). The protein operates within metabolic intermediate biosynthesis; (R)-mevalonate biosynthesis; (R)-mevalonate from acetyl-CoA: step 2/3. Its function is as follows. Catalyzes the condensation of acetyl-CoA with acetoacetyl-CoA to form 3-hydroxy-3-methylglutaryl-CoA (HMG-CoA). Functions in the mevalonate (MVA) pathway leading to isopentenyl diphosphate (IPP), a key precursor for the biosynthesis of isoprenoid compounds that are building blocks of archaeal membrane lipids. This Methanocaldococcus jannaschii (strain ATCC 43067 / DSM 2661 / JAL-1 / JCM 10045 / NBRC 100440) (Methanococcus jannaschii) protein is Hydroxymethylglutaryl-CoA synthase.